The chain runs to 139 residues: Acidic phospholipase A2 Ts-A4 (139 aa).

The N-terminal stretch at 1–16 is a signal peptide; that stretch reads MRTLWILAVLLVGVEG. 7 cysteine pairs are disulfide-bonded: Cys-42/Cys-132, Cys-44/Cys-60, Cys-59/Cys-111, Cys-65/Cys-139, Cys-66/Cys-104, Cys-73/Cys-97, and Cys-91/Cys-102. Residues Tyr-43, Gly-45, and Gly-47 each contribute to the Ca(2+) site. Residue His-63 is part of the active site. Residue Asp-64 coordinates Ca(2+). Asp-105 is an active-site residue.

Requires Ca(2+) as cofactor. In terms of tissue distribution, expressed by the venom gland.

The protein localises to the secreted. The enzyme catalyses a 1,2-diacyl-sn-glycero-3-phosphocholine + H2O = a 1-acyl-sn-glycero-3-phosphocholine + a fatty acid + H(+). PLA2 catalyzes the calcium-dependent hydrolysis of the 2-acyl groups in 3-sn-phosphoglycerides. The chain is Acidic phospholipase A2 Ts-A4 from Trimeresurus stejnegeri (Chinese green tree viper).